The primary structure comprises 322 residues: MSASIPDIKLSSGHLMPSIGFGCWKLANATAGEQVYQAIKAGYRLFDGAEDYGNEKEVGDGVKRAIDEGLVKREEIFLTSKLWNNYHDPKNVETALNKTLADLKVDYVDLFLIHFPIAFKFVPIEEKYPPGFYCGDGNNFVYEDVPILETWKALEKLVAAGKIKSIGVSNFPGALLLDLLRGATIKPAVLQVEHHPYLQQPKLIEFAQKAGVTITAYSSFGPQSFVEMNQGRALNTPTLFAHDTIKAIAAKYNKTPAEVLLRWAAQRGIAVIPKSNLPERLVQNRSFNTFDLTKEDFEEIAKLDIGLRFNDPWDWDNIPIFV.

Y52 serves as the catalytic Proton donor. H114 is a substrate binding site. Residues S169–N170, S218–E227, and K274–N284 each bind NAD(+).

This sequence belongs to the aldo/keto reductase family. As to quaternary structure, homodimer.

It carries out the reaction xylitol + NAD(+) = D-xylose + NADH + H(+). The enzyme catalyses xylitol + NADP(+) = D-xylose + NADPH + H(+). It functions in the pathway carbohydrate metabolism; D-xylose degradation. Reduces D-xylose into xylitol. Has a preference for NADPH, but can also utilize NADH as cosubstrate. The sequence is that of NAD(P)H-dependent D-xylose reductase (XYL1) from Candida tenuis (Yeast).